The sequence spans 208 residues: UPF0637 protein lp_2332 (208 aa).

The protein belongs to the UPF0637 family.

In Lactiplantibacillus plantarum (strain ATCC BAA-793 / NCIMB 8826 / WCFS1) (Lactobacillus plantarum), this protein is UPF0637 protein lp_2332.